The sequence spans 694 residues: 4-alpha-glucanotransferase (694 aa).

The protein belongs to the disproportionating enzyme family.

The protein localises to the cytoplasm. It carries out the reaction Transfers a segment of a (1-&gt;4)-alpha-D-glucan to a new position in an acceptor, which may be glucose or a (1-&gt;4)-alpha-D-glucan.. In Escherichia coli (strain K12), this protein is 4-alpha-glucanotransferase (malQ).